A 111-amino-acid polypeptide reads, in one-letter code: Aspartate 1-decarboxylase (111 aa).

Residue S25 is the Schiff-base intermediate with substrate; via pyruvic acid of the active site. S25 is modified (pyruvic acid (Ser)). T57 contributes to the substrate binding site. The active-site Proton donor is the Y58. 73 to 75 (GPA) is a binding site for substrate.

It belongs to the PanD family. Heterooctamer of four alpha and four beta subunits. It depends on pyruvate as a cofactor. In terms of processing, is synthesized initially as an inactive proenzyme, which is activated by self-cleavage at a specific serine bond to produce a beta-subunit with a hydroxyl group at its C-terminus and an alpha-subunit with a pyruvoyl group at its N-terminus.

The protein resides in the cytoplasm. The catalysed reaction is L-aspartate + H(+) = beta-alanine + CO2. It participates in cofactor biosynthesis; (R)-pantothenate biosynthesis; beta-alanine from L-aspartate: step 1/1. Catalyzes the pyruvoyl-dependent decarboxylation of aspartate to produce beta-alanine. The polypeptide is Aspartate 1-decarboxylase (Francisella tularensis subsp. holarctica (strain LVS)).